Reading from the N-terminus, the 354-residue chain is Elongation factor Ts (354 aa).

The tract at residues Thr81 to Val84 is involved in Mg(2+) ion dislocation from EF-Tu.

Belongs to the EF-Ts family.

It is found in the cytoplasm. Functionally, associates with the EF-Tu.GDP complex and induces the exchange of GDP to GTP. It remains bound to the aminoacyl-tRNA.EF-Tu.GTP complex up to the GTP hydrolysis stage on the ribosome. This chain is Elongation factor Ts, found in Campylobacter curvus (strain 525.92).